Reading from the N-terminus, the 277-residue chain is Phosphatidylglycerol--prolipoprotein diacylglyceryl transferase (277 aa).

The next 3 membrane-spanning stretches (helical) occupy residues 16–36 (FFQI…FYFL), 62–82 (LLFF…VLFY), and 101–121 (GMAF…FAHL). Residue arginine 145 coordinates a 1,2-diacyl-sn-glycero-3-phospho-(1'-sn-glycerol). The next 2 membrane-spanning stretches (helical) occupy residues 214–234 (PIWG…RFIA) and 243–263 (FLGL…PMIV).

It belongs to the Lgt family.

It localises to the cell inner membrane. The catalysed reaction is L-cysteinyl-[prolipoprotein] + a 1,2-diacyl-sn-glycero-3-phospho-(1'-sn-glycerol) = an S-1,2-diacyl-sn-glyceryl-L-cysteinyl-[prolipoprotein] + sn-glycerol 1-phosphate + H(+). The protein operates within protein modification; lipoprotein biosynthesis (diacylglyceryl transfer). Catalyzes the transfer of the diacylglyceryl group from phosphatidylglycerol to the sulfhydryl group of the N-terminal cysteine of a prolipoprotein, the first step in the formation of mature lipoproteins. This Leptothrix cholodnii (strain ATCC 51168 / LMG 8142 / SP-6) (Leptothrix discophora (strain SP-6)) protein is Phosphatidylglycerol--prolipoprotein diacylglyceryl transferase.